Here is a 288-residue protein sequence, read N- to C-terminus: MLHYTRLGRNMGLGDAYVKKVFDSVATKYDMMNDVLSLGIHRIWKKHFVEDCVCPLPGSKFLDVAGGTGDIAFRITDSIRARGQSFGIVPKTLDGTKVVVCDINAMMLKEGQKRAEREGYMDIDWVCASGEELPFEDGAFDSYTVSFGIRNFSDRPKALREAFRVLKVGGALHVLEFSRVTCPLLSVPYELWSYGFMPQAGRMLADEESYRYLVDSIRAFPDQETFAQMIRDAGFGYVRYENLTGGIACIHTGVKTTPTPITPTTSSDIPAQNTSEATCEVKPEPNSA.

Residues threonine 68, aspartate 102, and serine 146 each coordinate S-adenosyl-L-methionine. A compositionally biased stretch (low complexity) spans 260–270 (PITPTTSSDIP). Positions 260–288 (PITPTTSSDIPAQNTSEATCEVKPEPNSA) are disordered. Basic and acidic residues predominate over residues 279–288 (CEVKPEPNSA).

This sequence belongs to the class I-like SAM-binding methyltransferase superfamily. MenG/UbiE family. Component of a multi-subunit COQ enzyme complex.

It is found in the mitochondrion inner membrane. The enzyme catalyses a 2-methoxy-6-(all-trans-polyprenyl)benzene-1,4-diol + S-adenosyl-L-methionine = a 5-methoxy-2-methyl-3-(all-trans-polyprenyl)benzene-1,4-diol + S-adenosyl-L-homocysteine + H(+). It functions in the pathway cofactor biosynthesis; ubiquinone biosynthesis. Its function is as follows. Methyltransferase required for the conversion of 2-polyprenyl-6-methoxy-1,4-benzoquinol (DDMQH2) to 2-polyprenyl-3-methyl-6-methoxy-1,4-benzoquinol (DMQH2). This chain is 2-methoxy-6-polyprenyl-1,4-benzoquinol methylase, mitochondrial, found in Leishmania donovani.